The sequence spans 169 residues: MAAESLPFSFGTLSSWELEAWYEDLQEVLSSDENGGTYVSPPGNEEEESKIFTTLDPASLAWLTEEEPEPAEVTSTSQSPHSPDSSQSSLAQEEEEEDQGRTRKRKQSGHSPARAGKQRMKEKEQENERKVAQLAEENERLKQEIERLTREVEATRRALIDRMVNLHQA.

The interval 10–18 is interaction with TRIB3; sequence FGTLSSWEL. An N-terminal region spans residues 10–26; that stretch reads FGTLSSWELEAWYEDLQ. Phosphoserine; by CK2 occurs at positions 14, 15, 30, and 31. Positions 32–139 are disordered; sequence DENGGTYVSP…KVAQLAEENE (108 aa). Positions 74–89 are enriched in low complexity; it reads TSTSQSPHSPDSSQSS. Phosphoserine; by MAPK14 is present on residues serine 79 and serine 82. The bZIP domain occupies 99 to 162; sequence QGRTRKRKQS…EATRRALIDR (64 aa). The basic motif stretch occupies residues 101–130; the sequence is RTRKRKQSGHSPARAGKQRMKEKEQENERK. The segment covering 119–139 has biased composition (basic and acidic residues); sequence RMKEKEQENERKVAQLAEENE. A leucine-zipper region spans residues 134–148; sequence LAEENERLKQEIERL.

The protein belongs to the bZIP family. Heterodimer. Interacts with TCF7L2/TCF4, EP300/P300, HDAC1, HDAC5 and HDAC6. Interacts with TRIB3 which blocks its association with EP300/P300. Interacts with FOXO3, CEBPB and ATF4. In terms of assembly, interacts with isoform AltDDIT3 of DDIT3. Ubiquitinated, leading to its degradation by the proteasome. Post-translationally, phosphorylation at serine residues by MAPK14 enhances its transcriptional activation activity while phosphorylation at serine residues by CK2 inhibits its transcriptional activation activity.

It localises to the cytoplasm. The protein localises to the nucleus. Functionally, multifunctional transcription factor in endoplasmic reticulum (ER) stress response. Plays an essential role in the response to a wide variety of cell stresses and induces cell cycle arrest and apoptosis in response to ER stress. Plays a dual role both as an inhibitor of CCAAT/enhancer-binding protein (C/EBP) function and as an activator of other genes. Acts as a dominant-negative regulator of C/EBP-induced transcription: dimerizes with members of the C/EBP family, impairs their association with C/EBP binding sites in the promoter regions, and inhibits the expression of C/EBP regulated genes. Positively regulates the transcription of TRIB3, IL6, IL8, IL23, TNFRSF10B/DR5, PPP1R15A/GADD34, BBC3/PUMA, BCL2L11/BIM and ERO1L. Negatively regulates; expression of BCL2 and MYOD1, ATF4-dependent transcriptional activation of asparagine synthetase (ASNS), CEBPA-dependent transcriptional activation of hepcidin (HAMP) and CEBPB-mediated expression of peroxisome proliferator-activated receptor gamma (PPARG). Together with ATF4, mediates ER-mediated cell death by promoting expression of genes involved in cellular amino acid metabolic processes, mRNA translation and the unfolded protein response (UPR) in response to ER stress. Inhibits the canonical Wnt signaling pathway by binding to TCF7L2/TCF4, impairing its DNA-binding properties and repressing its transcriptional activity. Plays a regulatory role in the inflammatory response through the induction of caspase-11 (CASP4/CASP11) which induces the activation of caspase-1 (CASP1) and both these caspases increase the activation of pro-IL1B to mature IL1B which is involved in the inflammatory response. Acts as a major regulator of postnatal neovascularization through regulation of endothelial nitric oxide synthase (NOS3)-related signaling. This is DNA damage-inducible transcript 3 protein (DDIT3) from Homo sapiens (Human).